We begin with the raw amino-acid sequence, 527 residues long: ATP synthase subunit alpha (527 aa).

Gly172 to Thr179 is an ATP binding site.

This sequence belongs to the ATPase alpha/beta chains family. F-type ATPases have 2 components, CF(1) - the catalytic core - and CF(0) - the membrane proton channel. CF(1) has five subunits: alpha(3), beta(3), gamma(1), delta(1), epsilon(1). CF(0) has three main subunits: a(1), b(2) and c(9-12). The alpha and beta chains form an alternating ring which encloses part of the gamma chain. CF(1) is attached to CF(0) by a central stalk formed by the gamma and epsilon chains, while a peripheral stalk is formed by the delta and b chains.

It localises to the cell inner membrane. The enzyme catalyses ATP + H2O + 4 H(+)(in) = ADP + phosphate + 5 H(+)(out). Its function is as follows. Produces ATP from ADP in the presence of a proton gradient across the membrane. The alpha chain is a regulatory subunit. This Bacteroides fragilis (strain ATCC 25285 / DSM 2151 / CCUG 4856 / JCM 11019 / LMG 10263 / NCTC 9343 / Onslow / VPI 2553 / EN-2) protein is ATP synthase subunit alpha.